The chain runs to 346 residues: Acetylserotonin O-methyltransferase (346 aa).

S-adenosyl-L-methionine is bound by residues tyrosine 148, tryptophan 165, aspartate 211, 236 to 238, and lysine 253; that span reads GDF. The active-site Proton donor/acceptor is histidine 256. Substrate-binding residues include aspartate 257, asparagine 303, and glutamine 307.

The protein belongs to the class I-like SAM-binding methyltransferase superfamily. Cation-independent O-methyltransferase family. As to quaternary structure, homodimer. In terms of tissue distribution, expressed in pineal gland and retina.

It carries out the reaction N-acetylserotonin + S-adenosyl-L-methionine = melatonin + S-adenosyl-L-homocysteine + H(+). Its pathway is aromatic compound metabolism; melatonin biosynthesis; melatonin from serotonin: step 1/2. In terms of biological role, catalyzes the transfer of a methyl group onto N-acetylserotonin, producing melatonin (N-acetyl-5-methoxytryptamine). This is Acetylserotonin O-methyltransferase (ASMT) from Gallus gallus (Chicken).